The following is a 143-amino-acid chain: MRTTYMAKPNEVERKWYVIDAAGKPLGRVASEAAKLLRGKHKPEFTPHVDTGDFVIIINAEKAVLTGKKLEKKMFYRHSRYPGGLKAIPYGILMKTNPVLAFEKAVKGMLPHNRLGRKLFKKLKVYAGESHPHQAQKPEIWQF.

Belongs to the universal ribosomal protein uL13 family. In terms of assembly, part of the 50S ribosomal subunit.

In terms of biological role, this protein is one of the early assembly proteins of the 50S ribosomal subunit, although it is not seen to bind rRNA by itself. It is important during the early stages of 50S assembly. This is Large ribosomal subunit protein uL13 from Carboxydothermus hydrogenoformans (strain ATCC BAA-161 / DSM 6008 / Z-2901).